The primary structure comprises 843 residues: Protein P (843 aa).

Residues Met-1–Gln-177 are terminal protein domain (TP). The tract at residues Glu-178 to Leu-346 is spacer. Disordered stretches follow at residues Lys-228–Ala-255 and Glu-284–Ser-314. The span at Arg-239–Thr-249 shows a compositional bias: basic residues. The interval Glu-347–Gln-690 is polymerase/reverse transcriptase domain (RT). Positions Glu-357 to Ile-600 constitute a Reverse transcriptase domain. The Mg(2+) site is built by Asp-429, Asp-551, and Asp-552.

The protein belongs to the hepadnaviridae P protein family.

The catalysed reaction is DNA(n) + a 2'-deoxyribonucleoside 5'-triphosphate = DNA(n+1) + diphosphate. It catalyses the reaction Endonucleolytic cleavage to 5'-phosphomonoester.. Its activity is regulated as follows. Activated by host HSP70 and HSP40 in vitro to be able to bind the epsilon loop of the pgRNA. Because deletion of the RNase H region renders the protein partly chaperone-independent, the chaperones may be needed indirectly to relieve occlusion of the RNA-binding site by this domain. Inhibited by several reverse-transcriptase inhibitors: Lamivudine, Adefovir and Entecavir. Functionally, multifunctional enzyme that converts the viral RNA genome into dsDNA in viral cytoplasmic capsids. This enzyme displays a DNA polymerase activity that can copy either DNA or RNA templates, and a ribonuclease H (RNase H) activity that cleaves the RNA strand of RNA-DNA heteroduplexes in a partially processive 3'- to 5'-endonucleasic mode. Neo-synthesized pregenomic RNA (pgRNA) are encapsidated together with the P protein, and reverse-transcribed inside the nucleocapsid. Initiation of reverse-transcription occurs first by binding the epsilon loop on the pgRNA genome, and is initiated by protein priming, thereby the 5'-end of (-)DNA is covalently linked to P protein. Partial (+)DNA is synthesized from the (-)DNA template and generates the relaxed circular DNA (RC-DNA) genome. After budding and infection, the RC-DNA migrates in the nucleus, and is converted into a plasmid-like covalently closed circular DNA (cccDNA). The activity of P protein does not seem to be necessary for cccDNA generation, and is presumably released from (+)DNA by host nuclear DNA repair machinery. This is Protein P from Hepatitis B virus genotype F2 subtype adw4q (isolate Senegal/9203) (HBV-F).